The following is a 1451-amino-acid chain: DNA polymerase III PolC-type (1451 aa).

An Exonuclease domain is found at 416-575 (FVIFDIETTG…YDTEALKKVF (160 aa)).

Belongs to the DNA polymerase type-C family. PolC subfamily.

Its subcellular location is the cytoplasm. The catalysed reaction is DNA(n) + a 2'-deoxyribonucleoside 5'-triphosphate = DNA(n+1) + diphosphate. In terms of biological role, required for replicative DNA synthesis. This DNA polymerase also exhibits 3' to 5' exonuclease activity. This chain is DNA polymerase III PolC-type, found in Mycoplasma genitalium (strain ATCC 33530 / DSM 19775 / NCTC 10195 / G37) (Mycoplasmoides genitalium).